Reading from the N-terminus, the 235-residue chain is Leucyl/phenylalanyl-tRNA--protein transferase (235 aa).

Belongs to the L/F-transferase family.

It localises to the cytoplasm. It carries out the reaction N-terminal L-lysyl-[protein] + L-leucyl-tRNA(Leu) = N-terminal L-leucyl-L-lysyl-[protein] + tRNA(Leu) + H(+). The enzyme catalyses N-terminal L-arginyl-[protein] + L-leucyl-tRNA(Leu) = N-terminal L-leucyl-L-arginyl-[protein] + tRNA(Leu) + H(+). It catalyses the reaction L-phenylalanyl-tRNA(Phe) + an N-terminal L-alpha-aminoacyl-[protein] = an N-terminal L-phenylalanyl-L-alpha-aminoacyl-[protein] + tRNA(Phe). Functions in the N-end rule pathway of protein degradation where it conjugates Leu, Phe and, less efficiently, Met from aminoacyl-tRNAs to the N-termini of proteins containing an N-terminal arginine or lysine. This is Leucyl/phenylalanyl-tRNA--protein transferase from Magnetococcus marinus (strain ATCC BAA-1437 / JCM 17883 / MC-1).